Consider the following 486-residue polypeptide: Protein nucleotidyltransferase YdiU (486 aa).

Gly90, Gly92, Arg93, Lys113, Asp125, Gly126, Arg176, and Arg183 together coordinate ATP. Asp252 (proton acceptor) is an active-site residue. 2 residues coordinate Mg(2+): Asn253 and Asp262. Asp262 contacts ATP.

It belongs to the SELO family. Mg(2+) is required as a cofactor. It depends on Mn(2+) as a cofactor.

It carries out the reaction L-seryl-[protein] + ATP = 3-O-(5'-adenylyl)-L-seryl-[protein] + diphosphate. The catalysed reaction is L-threonyl-[protein] + ATP = 3-O-(5'-adenylyl)-L-threonyl-[protein] + diphosphate. It catalyses the reaction L-tyrosyl-[protein] + ATP = O-(5'-adenylyl)-L-tyrosyl-[protein] + diphosphate. The enzyme catalyses L-histidyl-[protein] + UTP = N(tele)-(5'-uridylyl)-L-histidyl-[protein] + diphosphate. It carries out the reaction L-seryl-[protein] + UTP = O-(5'-uridylyl)-L-seryl-[protein] + diphosphate. The catalysed reaction is L-tyrosyl-[protein] + UTP = O-(5'-uridylyl)-L-tyrosyl-[protein] + diphosphate. Nucleotidyltransferase involved in the post-translational modification of proteins. It can catalyze the addition of adenosine monophosphate (AMP) or uridine monophosphate (UMP) to a protein, resulting in modifications known as AMPylation and UMPylation. The sequence is that of Protein nucleotidyltransferase YdiU from Stutzerimonas stutzeri (strain A1501) (Pseudomonas stutzeri).